We begin with the raw amino-acid sequence, 358 residues long: Probable aminomethyltransferase (358 aa).

Belongs to the GcvT family. The glycine cleavage system is composed of four proteins: P, T, L and H.

The catalysed reaction is N(6)-[(R)-S(8)-aminomethyldihydrolipoyl]-L-lysyl-[protein] + (6S)-5,6,7,8-tetrahydrofolate = N(6)-[(R)-dihydrolipoyl]-L-lysyl-[protein] + (6R)-5,10-methylene-5,6,7,8-tetrahydrofolate + NH4(+). In terms of biological role, the glycine cleavage system catalyzes the degradation of glycine. This chain is Probable aminomethyltransferase, found in Natronomonas pharaonis (strain ATCC 35678 / DSM 2160 / CIP 103997 / JCM 8858 / NBRC 14720 / NCIMB 2260 / Gabara) (Halobacterium pharaonis).